The following is a 161-amino-acid chain: Endoribonuclease YbeY (161 aa).

His127, His131, and His137 together coordinate Zn(2+).

This sequence belongs to the endoribonuclease YbeY family. It depends on Zn(2+) as a cofactor.

The protein resides in the cytoplasm. Functionally, single strand-specific metallo-endoribonuclease involved in late-stage 70S ribosome quality control and in maturation of the 3' terminus of the 16S rRNA. The sequence is that of Endoribonuclease YbeY from Listeria monocytogenes serotype 4a (strain HCC23).